The sequence spans 256 residues: N-glycosylase/DNA lyase (256 aa).

Gln31, Ser58, and Trp69 together coordinate 8-oxoguanine. The segment at 125 to 184 (TLRQLSHIVGARREQKTLVFTIKILNYAYMCSRGVNRVLPFDIPIPVDYRVARLTWCAGL) is helix-hairpin-helix. Residue Lys140 is the Schiff-base intermediate with DNA of the active site. Phe144 and Pro170 together coordinate 8-oxoguanine. Residue Asp172 is part of the active site. Residues Asp218 and Trp222 each coordinate 8-oxoguanine.

It belongs to the archaeal N-glycosylase/DNA lyase (AGOG) family.

The enzyme catalyses 2'-deoxyribonucleotide-(2'-deoxyribose 5'-phosphate)-2'-deoxyribonucleotide-DNA = a 3'-end 2'-deoxyribonucleotide-(2,3-dehydro-2,3-deoxyribose 5'-phosphate)-DNA + a 5'-end 5'-phospho-2'-deoxyribonucleoside-DNA + H(+). In terms of biological role, DNA repair enzyme that is part of the base excision repair (BER) pathway; protects from oxidative damage by removing the major product of DNA oxidation, 8-oxoguanine (GO), from single- and double-stranded DNA substrates. The chain is N-glycosylase/DNA lyase from Pyrobaculum aerophilum (strain ATCC 51768 / DSM 7523 / JCM 9630 / CIP 104966 / NBRC 100827 / IM2).